The primary structure comprises 332 residues: Protein FAM131B (332 aa).

Residues 1-22 (MDSTSSLHGSSLHRPSTEQTRT) are disordered. Phosphoserine is present on residues S47, S114, and S117. A disordered region spans residues 221–332 (LGPAFDDSQP…FDEEEGDANN (112 aa)). Basic and acidic residues-rich tracts occupy residues 272 to 281 (PVEEEKRPLA) and 288 to 302 (AGCR…REDP). S295, S297, and S313 each carry phosphoserine. Phosphothreonine is present on T316. Residues S317, S318, and S322 each carry the phosphoserine modification. The segment covering 323 to 332 (FDEEEGDANN) has biased composition (acidic residues).

This sequence belongs to the FAM131 family.

The sequence is that of Protein FAM131B (Fam131b) from Rattus norvegicus (Rat).